A 459-amino-acid chain; its full sequence is MNKPLTPSTYIRNLNVGILRKLSDFIDPQEGWKKLAVAIKKPSGDDRYNQFHIRRFEALLQTGKSPTCELLFDWGTTNCTVGDLVDLLVQIELFAPATLLLPDAVPQTVKSLPPREAATVAQTHGPCQEKDRTSVMPMPKLEHSCEPPDSSSPDNRSVESSDTRFHSFSFHELKSITNNFDEQPASAGGNRMGEGGFGVVYKGCVNNTIVAVKKLGAMVEISTEELKQQFDQEIKVMATCQHENLVELLGFSSDSDNLCLVYAYMPNGSLLDRLSCLDGTPPLSWHTRCKVAQGTANGIRFLHENHHIHRDIKSANILLDKDFTAKISDFGLARASARLAQTVMTSRIVGTTAYMAPEALRGEITPKSDIYSFGVVLLELITGLAAVDENREPQLLLDIKEEIEDEEKTIEDYTDEKMSDADPASVEAMYSAASQCLHEKKNRRPDIAKVQQLLQEMSA.

The residue at position 1 (Met1) is an N-acetylmethionine. Positions 20–104 constitute a Death domain; that stretch reads RKLSDFIDPQ…APATLLLPDA (85 aa). Lys34 bears the N6-acetyllysine mark. Residues 115–161 are disordered; it reads REAATVAQTHGPCQEKDRTSVMPMPKLEHSCEPPDSSSPDNRSVESS. The region spanning 186 to 454 is the Protein kinase domain; the sequence is SAGGNRMGEG…PDIAKVQQLL (269 aa). ATP is bound by residues 192-200 and Lys213; that span reads MGEGGFGVV. Asp311 functions as the Proton acceptor in the catalytic mechanism. ATP contacts are provided by residues 313 to 316 and Asp329; that span reads KSAN. Phosphothreonine occurs at positions 342 and 345. Ser346 is subject to Phosphoserine.

This sequence belongs to the protein kinase superfamily. TKL Ser/Thr protein kinase family. Pelle subfamily. As to quaternary structure, associates with MYD88 and IRAK2 to form a ternary complex called the Myddosome. Once phosphorylated, IRAK4 dissociates from the receptor complex and then associates with the TNF receptor-associated factor 6 (TRAF6), IRAK1, and PELI1; this intermediate complex is required for subsequent NF-kappa-B activation. Direct binding of SMAD6 to PELI1 prevents complex formation and hence negatively regulates IL1R-TLR signaling and eventually NF-kappa-B-mediated gene expression. Interacts with IL1RL1. Interacts (when phosphorylated) with IRAK1. May interact (when phosphorylated) with IRAK3. The cofactor is Mg(2+). In terms of processing, phosphorylated.

It is found in the cytoplasm. The catalysed reaction is L-seryl-[protein] + ATP = O-phospho-L-seryl-[protein] + ADP + H(+). It catalyses the reaction L-threonyl-[protein] + ATP = O-phospho-L-threonyl-[protein] + ADP + H(+). Serine/threonine-protein kinase that plays a critical role in initiating innate immune response against foreign pathogens. Involved in Toll-like receptor (TLR) and IL-1R signaling pathways. Is rapidly recruited by MYD88 to the receptor-signaling complex upon TLR activation to form the Myddosome together with IRAK2. Phosphorylates initially IRAK1, thus stimulating the kinase activity and intensive autophosphorylation of IRAK1. Phosphorylates E3 ubiquitin ligases Pellino proteins (PELI1, PELI2 and PELI3) to promote pellino-mediated polyubiquitination of IRAK1. Then, the ubiquitin-binding domain of IKBKG/NEMO binds to polyubiquitinated IRAK1 bringing together the IRAK1-MAP3K7/TAK1-TRAF6 complex and the NEMO-IKKA-IKKB complex. In turn, MAP3K7/TAK1 activates IKKs (CHUK/IKKA and IKBKB/IKKB) leading to NF-kappa-B nuclear translocation and activation. Alternatively, phosphorylates TIRAP to promote its ubiquitination and subsequent degradation. Phosphorylates NCF1 and regulates NADPH oxidase activation after LPS stimulation suggesting a similar mechanism during microbial infections. The sequence is that of Interleukin-1 receptor-associated kinase 4 (Irak4) from Mus musculus (Mouse).